The primary structure comprises 166 residues: Endoribonuclease YbeY (166 aa).

3 residues coordinate Zn(2+): His131, His135, and His141.

This sequence belongs to the endoribonuclease YbeY family. Zn(2+) serves as cofactor.

The protein localises to the cytoplasm. Single strand-specific metallo-endoribonuclease involved in late-stage 70S ribosome quality control and in maturation of the 3' terminus of the 16S rRNA. The polypeptide is Endoribonuclease YbeY (Dehalococcoides mccartyi (strain CBDB1)).